A 346-amino-acid chain; its full sequence is Tryptophan--tRNA ligase (346 aa).

Residues 10–12 (QAS) and 18–19 (GN) contribute to the ATP site. Positions 11–19 (ASGKQHLGN) match the 'HIGH' region motif. Aspartate 140 contacts L-tryptophan. ATP contacts are provided by residues 152-154 (GND), isoleucine 191, and 200-204 (KMSKS). A 'KMSKS' region motif is present at residues 200–204 (KMSKS).

It belongs to the class-I aminoacyl-tRNA synthetase family. As to quaternary structure, homodimer.

It is found in the cytoplasm. The enzyme catalyses tRNA(Trp) + L-tryptophan + ATP = L-tryptophyl-tRNA(Trp) + AMP + diphosphate + H(+). Catalyzes the attachment of tryptophan to tRNA(Trp). The sequence is that of Tryptophan--tRNA ligase from Mycoplasma pneumoniae (strain ATCC 29342 / M129 / Subtype 1) (Mycoplasmoides pneumoniae).